Here is a 173-residue protein sequence, read N- to C-terminus: Sialic acid TRAP transporter small permease protein SiaQ (173 aa).

4 consecutive transmembrane segments (helical) span residues 13 to 33 (IEEI…TWQI), 46 to 66 (SEEL…AIAI), 87 to 107 (LSLV…IIVL), and 123 to 143 (LGIS…FMVF).

It belongs to the TRAP transporter small permease family. In terms of assembly, the complex comprises the extracytoplasmic solute receptor protein SiaP, and the two transmembrane proteins SiaQ and SiaM. SiaQ and SiaM form a tight 1:1 complex.

Its subcellular location is the cell inner membrane. Its function is as follows. Part of the tripartite ATP-independent periplasmic (TRAP) transport system SiaPQM that catalyzes unidirectional Na(+)-dependent sialic acid uptake. The polypeptide is Sialic acid TRAP transporter small permease protein SiaQ (Vibrio cholerae serotype O1 (strain ATCC 39315 / El Tor Inaba N16961)).